The chain runs to 93 residues: Small ribosomal subunit protein bS20 (93 aa).

It belongs to the bacterial ribosomal protein bS20 family.

Binds directly to 16S ribosomal RNA. The sequence is that of Small ribosomal subunit protein bS20 from Dictyoglomus thermophilum (strain ATCC 35947 / DSM 3960 / H-6-12).